The chain runs to 1086 residues: Lysine-specific demethylase 4B (1086 aa).

Residues 15 to 57 (IMTFRPTMDEFRDFNRYVAYIESQGAHRAGLAKIIPPKEWKPR) enclose the JmjN domain. Residue Y133 coordinates 2-oxoglutarate. Residues 146 to 309 (VAQWNIGNLR…YGKVATQCTC (164 aa)) form the JmjC domain. Residues H189 and E191 each coordinate Fe cation. Residues N199 and K207 each contribute to the 2-oxoglutarate site. Residues C235 and H241 each contribute to the Zn(2+) site. K242 is a 2-oxoglutarate binding site. Residue H277 participates in Fe cation binding. Residues C307 and C309 each contribute to the Zn(2+) site. Positions 379–395 (SRPWRKAEEERRREPTR) are enriched in basic and acidic residues. Disordered stretches follow at residues 379 to 536 (SRPW…PPGA) and 575 to 624 (PMEL…LSVV). Over residues 401–410 (SHRRRSQPKK) the composition is skewed to basic residues. Residues 441 to 450 (MPEDEEEEEL) are compositionally biased toward acidic residues. Residues 456–467 (HEAEGVEEDGRG) show a composition bias toward basic and acidic residues. The segment covering 468-480 (KPRPTKARNKKKT) has biased composition (basic residues). The segment covering 512-522 (GPAMGPMAAEG) has biased composition (low complexity). Residues 585–597 (QAQAGDSQGTTPF) show a composition bias toward polar residues. Residue K599 is modified to N6-acetyllysine. The PHD-type 1 zinc finger occupies 719-777 (MCFTSSGENTEPLPANSYVGEDGTSPLISCAHCCLQVHASCYGVRPELAKEGWTCSRCA). The segment at 782-815 (TAECCLCNLRGGALQRTTEHRWIHVICAIAVPEV) adopts a C2HC pre-PHD-type zinc-finger fold. The PHD-type 2 zinc finger occupies 838–895 (LKCIYCRKRMKRVSGACIQCSYEHCSTSFHVTCAHAAGVLMEPDDWPYVVSITCLKHR). Tudor domains are found at residues 905–962 (RTVS…CLRL) and 963–1019 (GPPP…EELP). The disordered stretch occupies residues 1024-1043 (SRLSLSTGTPQEPSFSGDDV). Polar residues predominate over residues 1026-1037 (LSLSTGTPQEPS).

The protein belongs to the JHDM3 histone demethylase family. Fe(2+) serves as cofactor.

Its subcellular location is the nucleus. It catalyses the reaction N(6),N(6),N(6)-trimethyl-L-lysyl(9)-[histone H3] + 2 2-oxoglutarate + 2 O2 = N(6)-methyl-L-lysyl(9)-[histone H3] + 2 formaldehyde + 2 succinate + 2 CO2. Functionally, histone demethylase that specifically demethylates 'Lys-9' of histone H3, thereby playing a role in histone code. Does not demethylate histone H3 'Lys-4', H3 'Lys-27', H3 'Lys-36' nor H4 'Lys-20'. Only able to demethylate trimethylated H3 'Lys-9', with a weaker activity than KDM4A, KDM4C and KDM4D. Demethylation of Lys residue generates formaldehyde and succinate. Plays a critical role in the development of the central nervous system (CNS). In Mus musculus (Mouse), this protein is Lysine-specific demethylase 4B (Kdm4b).